The primary structure comprises 247 residues: TLC domain-containing protein 1 (247 aa).

Positions 1–27 (MPLLLHPAWPLLLGATLTFRALRRVLC) are cleaved as a signal peptide. The Extracellular portion of the chain corresponds to 28–46 (RLPLPAHVQTDPLRTWRWH). The TLC domain occupies 40–234 (LRTWRWHNLL…LLRSDFCPER (195 aa)). A helical transmembrane segment spans residues 47–67 (NLLVSFTHSIVSGIWALLCIW). The Cytoplasmic segment spans residues 68–83 (QTPEMLVEIETAWSVC). A helical transmembrane segment spans residues 84–104 (GYLLVCFSAGYFIHDTVDIVV). Over 105-123 (SRQTRASWEYLVHHVMAMG) the chain is Extracellular. Positions 124 to 144 (AFFSGIFWKRFVGGGVLTLLV) form an intramembrane region, helical. Residues 145–173 (EVSNIFLTLRMMMKINNAQDILLYKVNKY) lie on the Extracellular side of the membrane. Residues 174–194 (VNLVMYFLFRLAPQAYLTKFF) form a helical membrane-spanning segment. Residues 195-201 (LQYAGQR) are Cytoplasmic-facing. A helical transmembrane segment spans residues 202–222 (TLGTFLLSILLMLDVMILIYF). Residues 223 to 247 (SRLLRSDFCPERAPSRQQKDKFLTE) are Extracellular-facing.

It is found in the cell membrane. Regulates the composition and fluidity of the plasma membrane. Inhibits the incorporation of membrane-fluidizing phospholipids containing omega-3 long-chain polyunsaturated fatty acids (LCPUFA) and thereby promotes membrane rigidity. Does not appear to have any effect on LCPUFA synthesis. The sequence is that of TLC domain-containing protein 1 (Tlcd1) from Rattus norvegicus (Rat).